The following is an 899-amino-acid chain: 1,4-alpha-glucan-branching enzyme 3, chloroplastic/amyloplastic (899 aa).

Residues methionine 1–arginine 49 constitute a chloroplast transit peptide. The segment at arginine 47 to alanine 67 is disordered. Glutamate 612 acts as the Proton donor in catalysis.

It belongs to the glycosyl hydrolase 13 family. GlgB subfamily. Monomer. In terms of tissue distribution, mostly expressed in flowers and inflorescence, and, to a lower extent, in seedlings, roots, stems, leaves, siliques and seeds.

It is found in the plastid. The protein resides in the chloroplast stroma. The protein localises to the amyloplast. It catalyses the reaction Transfers a segment of a (1-&gt;4)-alpha-D-glucan chain to a primary hydroxy group in a similar glucan chain.. It participates in glycan biosynthesis; starch biosynthesis. Its function is as follows. Catalyzes the formation of the alpha-1,6-glucosidic linkages in starch by scission of a 1,4-alpha-linked oligosaccharide from growing alpha-1,4-glucan chains and the subsequent attachment of the oligosaccharide to the alpha-1,6 position. Essential during embryogenesis. This chain is 1,4-alpha-glucan-branching enzyme 3, chloroplastic/amyloplastic (SBE3), found in Arabidopsis thaliana (Mouse-ear cress).